The primary structure comprises 688 residues: MLIRFKINEIECEVDEEKEDLTILQACTANGIEIPRFCYHEKLTIAGNCRMCLVYVTNEEKLLAACGIPLDENFDDESIETEIDEILKAREGVMEFLLINHPLDCPICDQGGECDLQEQTIAYGLDTGRFYIKKRAVEVKAFGRLIKGIMTRCIHCTRCVRFLTEIAGVNELGVLGRGYNMEIGTYKKNVIIESELSGNIIDLCPVGALTSAVYAYKGRPWELKNIKGIDIFDTVLTPINYQVKGGEIFRILPRINDRLNEEWITDKVRFHYESYKIIEKMRKDTPSYKIQANKFIELSWKTALKMVFKVLLNKKNKVDLIIGSKINSTNLRIYKELMNRLGSKNYITENGLLFKKFNYDFRENYINSNDLYNVDQNDLVLLCGINLRVESPLLNIKLRNINFGDDEIETRKKIGIIGNKFDWKQESEYLGSTVNSMLKVFEGRFPYCQQIKKSKAPLILVGSSLLSRIAISLQEIRAAFEIASNIKPENVLLITQGANFGMALEEGIFKENFSKGGNVLYSIDSNEYKVSKTINYIIYQGILNDTFENKIDLYLPSKHYFEDFESDREIYVNTFGQRSEIEKLRISKGNKIKENSMIGYIQLMYLNKKEMNRKEKEQKEIKITYRGIKQKEKRQVKINKNLTINNIIDNYYMTDINSRLSKNLMITGQLRKEKKIMEAGSWKNKTCI.

The region spanning 1–85 is the 2Fe-2S ferredoxin-type domain; that stretch reads MLIRFKINEI…DESIETEIDE (85 aa). Residues Cys-38, Cys-49, Cys-52, and Cys-66 each contribute to the [2Fe-2S] cluster site. One can recognise a 4Fe-4S His(Cys)3-ligated-type domain in the interval 85–124; sequence EILKAREGVMEFLLINHPLDCPICDQGGECDLQEQTIAYG. The [4Fe-4S] cluster site is built by His-101, Cys-105, Cys-108, Cys-114, Cys-153, Cys-156, Cys-159, and Cys-204. Residues 223 to 279 enclose the 4Fe-4S Mo/W bis-MGD-type domain; the sequence is LKNIKGIDIFDTVLTPINYQVKGGEIFRILPRINDRLNEEWITDKVRFHYESYKIIE.

Belongs to the complex I 75 kDa subunit family. As to quaternary structure, complex I is composed of about 45 different subunits. Requires [2Fe-2S] cluster as cofactor. The cofactor is [4Fe-4S] cluster.

The protein resides in the mitochondrion inner membrane. The enzyme catalyses a ubiquinone + NADH + 5 H(+)(in) = a ubiquinol + NAD(+) + 4 H(+)(out). Functionally, core subunit of the mitochondrial membrane respiratory chain NADH dehydrogenase (Complex I) that is believed to belong to the minimal assembly required for catalysis. Complex I functions in the transfer of electrons from NADH to the respiratory chain. The immediate electron acceptor for the enzyme is believed to be ubiquinone. This is the largest subunit of complex I and it is a component of the iron-sulfur (IP) fragment of the enzyme. It may form part of the active site crevice where NADH is oxidized. The sequence is that of NADH-ubiquinone oxidoreductase 75 kDa subunit (nad11) from Dictyostelium citrinum (Slime mold).